Reading from the N-terminus, the 363-residue chain is UDP-N-acetylglucosamine--N-acetylmuramyl-(pentapeptide) pyrophosphoryl-undecaprenol N-acetylglucosamine transferase (363 aa).

UDP-N-acetyl-alpha-D-glucosamine contacts are provided by residues 14–16, R171, S200, and Q290; that span reads TGG.

This sequence belongs to the glycosyltransferase 28 family. MurG subfamily.

The protein localises to the cell inner membrane. It catalyses the reaction di-trans,octa-cis-undecaprenyl diphospho-N-acetyl-alpha-D-muramoyl-L-alanyl-D-glutamyl-meso-2,6-diaminopimeloyl-D-alanyl-D-alanine + UDP-N-acetyl-alpha-D-glucosamine = di-trans,octa-cis-undecaprenyl diphospho-[N-acetyl-alpha-D-glucosaminyl-(1-&gt;4)]-N-acetyl-alpha-D-muramoyl-L-alanyl-D-glutamyl-meso-2,6-diaminopimeloyl-D-alanyl-D-alanine + UDP + H(+). It participates in cell wall biogenesis; peptidoglycan biosynthesis. In terms of biological role, cell wall formation. Catalyzes the transfer of a GlcNAc subunit on undecaprenyl-pyrophosphoryl-MurNAc-pentapeptide (lipid intermediate I) to form undecaprenyl-pyrophosphoryl-MurNAc-(pentapeptide)GlcNAc (lipid intermediate II). This Borreliella afzelii (strain PKo) (Borrelia afzelii) protein is UDP-N-acetylglucosamine--N-acetylmuramyl-(pentapeptide) pyrophosphoryl-undecaprenol N-acetylglucosamine transferase.